A 137-amino-acid chain; its full sequence is MTSPATFGLSKSERLYLRDEINTVFGEGKAFVVYPLRVVYRLGSEHRAAYSSMLVSVAKKRFRRAVKRNRVKRLVREAYRLNKHLLNDVLQERQIYATIAFMVVSDELPDFRTVERAMQKSLIRIAGNVPSSALKNE.

It belongs to the RnpA family. Consists of a catalytic RNA component (M1 or rnpB) and a protein subunit.

It carries out the reaction Endonucleolytic cleavage of RNA, removing 5'-extranucleotides from tRNA precursor.. In terms of biological role, RNaseP catalyzes the removal of the 5'-leader sequence from pre-tRNA to produce the mature 5'-terminus. It can also cleave other RNA substrates such as 4.5S RNA. The protein component plays an auxiliary but essential role in vivo by binding to the 5'-leader sequence and broadening the substrate specificity of the ribozyme. The protein is Ribonuclease P protein component of Porphyromonas gingivalis (strain ATCC 33277 / DSM 20709 / CIP 103683 / JCM 12257 / NCTC 11834 / 2561).